The primary structure comprises 53 residues: Reg12l (53 aa).

Positions 1 to 34 (RVLFRSGDQPADQPAERMQDISPEQNPLFHPDKR) are excised as a propeptide. Intrachain disulfides connect Cys36–Cys50, Cys37–Cys48, and Cys42–Cys51.

It belongs to the conotoxin M superfamily. Expressed by the venom duct.

Its subcellular location is the secreted. The sequence is that of Reg12l from Conus regius (Crown cone).